Consider the following 646-residue polypeptide: Anoctamin-10 (646 aa).

A run of 8 helical transmembrane segments spans residues 210–230 (LYFGFLEYFTFALIPMALIGI), 241–261 (DKYVLFAVFNLVWSTVFLEVW), 314–334 (IYLVSVPFVLLCLYLSFYVMM), 357–377 (VLLFVPSIIYAVVIEIMNLLY), 404–424 (VLVFNFVNCFASLFYIAFVMQ), 502–522 (FLLFGYVSLFSCVHPLAAVLV), 557–577 (LAFETMSIIAVVTNCALIALS), and 592–612 (ILTVVAIEHVLLAFKFILAFV).

The protein belongs to the anoctamin family.

The protein resides in the membrane. Its function is as follows. Does not exhibit calcium-activated chloride channel (CaCC) activity. Can inhibit the activity of ANO1. This is Anoctamin-10 (ano10) from Danio rerio (Zebrafish).